The chain runs to 174 residues: Probasin (174 aa).

Residues 1 to 18 (MMRVIILLLTLHVLGVSS) form the signal peptide. A disulfide bridge connects residues C77 and C168.

The protein belongs to the calycin superfamily. Lipocalin family.

It is found in the secreted. The polypeptide is Probasin (Pbsn) (Mus musculus (Mouse)).